The following is a 1005-amino-acid chain: Negative regulator of pleiotropic drug resistance STB5 (1005 aa).

Residues methionine 1–glutamate 28 are disordered. Residues cysteine 32 to cysteine 59 constitute a DNA-binding region (zn(2)-C6 fungal-type). Disordered stretches follow at residues glycine 129 to arginine 151, lysine 666 to lysine 693, and threonine 763 to arginine 831. Residues lysine 673–lysine 693 show a composition bias toward basic and acidic residues. Over residues threonine 763–glutamine 773 the composition is skewed to polar residues. Residues glutamate 792–asparagine 801 are compositionally biased toward basic and acidic residues.

It is found in the nucleus. Transcription factor that negatively regulates pleiotropic drug resistance genes, including the ABC transporter genes CDR1, PDH1, and YOR1. The chain is Negative regulator of pleiotropic drug resistance STB5 from Candida glabrata (strain ATCC 2001 / BCRC 20586 / JCM 3761 / NBRC 0622 / NRRL Y-65 / CBS 138) (Yeast).